The sequence spans 26 residues: Acetyl-CoA acetyltransferase (26 aa).

Cys21 (acyl-thioester intermediate) is an active-site residue.

This sequence belongs to the thiolase-like superfamily. Thiolase family. As to quaternary structure, homotetramer. Post-translationally, succinylation, adjacent to a coenzyme A binding site. Desuccinylated by SIRT5.

The protein resides in the mitochondrion. It catalyses the reaction 2 acetyl-CoA = acetoacetyl-CoA + CoA. The chain is Acetyl-CoA acetyltransferase from Sus scrofa (Pig).